Consider the following 277-residue polypeptide: Phosphate import ATP-binding protein PstB (277 aa).

One can recognise an ABC transporter domain in the interval 31–272; sequence IEVPGLSLYY…PAKKQTEDYI (242 aa). Position 63–70 (63–70) interacts with ATP; the sequence is GPSGCGKS.

It belongs to the ABC transporter superfamily. Phosphate importer (TC 3.A.1.7) family. The complex is composed of two ATP-binding proteins (PstB), two transmembrane proteins (PstC and PstA) and a solute-binding protein (PstS).

Its subcellular location is the cell inner membrane. It carries out the reaction phosphate(out) + ATP + H2O = ADP + 2 phosphate(in) + H(+). Part of the ABC transporter complex PstSACB involved in phosphate import. Responsible for energy coupling to the transport system. This chain is Phosphate import ATP-binding protein PstB, found in Pseudomonas fluorescens (strain ATCC BAA-477 / NRRL B-23932 / Pf-5).